The following is a 307-amino-acid chain: Sesquiterpene synthase-like protein Agr10 (307 aa).

The interval 287 to 307 (GRYFGDRGPENQSDIPTSSNR) is disordered. A compositionally biased stretch (polar residues) spans 296-307 (ENQSDIPTSSNR).

The protein belongs to the terpene synthase family.

The polypeptide is Sesquiterpene synthase-like protein Agr10 (Cyclocybe aegerita (Black poplar mushroom)).